The sequence spans 232 residues: GFP-like fluorescent chromoprotein dsFP483 (232 aa).

Residues 66-68 constitute a cross-link (2-iminomethyl-5-imidazolinone (Gln-Gly)); the sequence is QYG. Position 67 is a 2,3-didehydrotyrosine (tyrosine 67).

The protein belongs to the GFP family. Post-translationally, contains a chromophore consisting of modified amino acid residues. The chromophore is formed by autocatalytic backbone condensation between Xaa-N and Gly-(N+2), oxidation of Tyr-(N+1) to didehydrotyrosine, and formation of a double bond to the alpha-amino nitrogen of residue Xaa-N. Maturation of the chromophore requires nothing other than molecular oxygen. The precise stereochemistry of the tyrosine has not been determined. Oral disk.

Its function is as follows. Pigment protein that is green in color. The sequence is that of GFP-like fluorescent chromoprotein dsFP483 from Discosoma striata (Striped mushroom).